The sequence spans 188 residues: MIVILNNGGQYVHRIHRSLRYLKIPSKIIPNSTPLAEIEENKEIKGIILSGGPDIEKASNCLDIALNSKLPILGICLGHQIIAKAYGGEIGRAESEEYAHSKIFVKEENDLFKNVPKEFTAWASHKDEVVGAPLNFEILAYSNICEVEAMKHKEKPIYGVQFHPEVSHTENGAEILKNFCKVCGLLGE.

The Glutamine amidotransferase type-1 domain occupies 1 to 188 (MIVILNNGGQ…FCKVCGLLGE (188 aa)). Residue Cys-76 is the Nucleophile of the active site. Active-site residues include His-163 and Glu-165.

In terms of assembly, heterodimer composed of a glutamine amidotransferase subunit (A) and a GMP-binding subunit (B).

It carries out the reaction XMP + L-glutamine + ATP + H2O = GMP + L-glutamate + AMP + diphosphate + 2 H(+). It functions in the pathway purine metabolism; GMP biosynthesis; GMP from XMP (L-Gln route): step 1/1. Catalyzes the synthesis of GMP from XMP. The sequence is that of GMP synthase [glutamine-hydrolyzing] subunit A from Methanococcus aeolicus (strain ATCC BAA-1280 / DSM 17508 / OCM 812 / Nankai-3).